Here is an 843-residue protein sequence, read N- to C-terminus: Glycogen phosphorylase, brain form (843 aa).

A2 bears the N-acetylalanine mark. At S15 the chain carries Phosphoserine; by PHK; in form phosphorylase A. D43, Y197, and R310 together coordinate AMP. Y197 bears the Phosphotyrosine mark. Y473 bears the Phosphotyrosine mark. K569 provides a ligand contact to pyridoxal 5'-phosphate. A pyridoxal 5'-phosphate region spans residues 677–678 (TG). K681 is modified (N6-(pyridoxal phosphate)lysine).

This sequence belongs to the glycogen phosphorylase family. Homodimer. Dimers associate into a tetramer to form the enzymatically active phosphorylase A. The cofactor is pyridoxal 5'-phosphate. In terms of processing, phosphorylation of Ser-15 converts phosphorylase B (unphosphorylated) to phosphorylase A.

It catalyses the reaction [(1-&gt;4)-alpha-D-glucosyl](n) + phosphate = [(1-&gt;4)-alpha-D-glucosyl](n-1) + alpha-D-glucose 1-phosphate. Activity of phosphorylase is controlled both by allosteric means (through the non-covalent binding of metabolites) and by covalent modification. Thus AMP allosterically activates, whereas ATP, ADP, and glucose-6-phosphate allosterically inhibit, phosphorylase B. Functionally, glycogen phosphorylase that regulates glycogen mobilization. Phosphorylase is an important allosteric enzyme in carbohydrate metabolism. Enzymes from different sources differ in their regulatory mechanisms and in their natural substrates. However, all known phosphorylases share catalytic and structural properties. The sequence is that of Glycogen phosphorylase, brain form (PYGB) from Ovis aries (Sheep).